Here is a 470-residue protein sequence, read N- to C-terminus: MPLALYDTWSRTVRPFTPIRAGQVGMYGCGPTVYDDAHIGNLRTYVFEDLLRRVLERNGYAVRHVVNITDVGHLTSDADEGEDKMEKGSRRTGESAWAIARRYTEAFVRDWHALNLLEPTIWCRATDHIAEQIAFIETLDRAGYVYRTDDGLYFDTSRQDDYGYLARLDRAGLQAGKRVALGGKRSITDFALWKFSPADVQRQMEWDSPWGRGFPGWHIECSAMSAKYLGTLFDIHCGGEDHIAVHHSNEIAQTRAAHGTQLANYWMHGHFLTLDVHTKMSKSSGDFVRLQTLQRRGVDPLAYRYLCLTAHYRSKLHFTWESLDAAQTALNRLRHLYIGWPDGGRVDADFAARFDAEVNEDLNLPRALAVLWDLVRSNLPPATLKATVDSFDMVLGLGLREWRPVAVDVPEHVRALLGERARARAEKDWAQADRIREALSAEGWRVEDTPEGQRLFGMAMGASEPDVPPQ.

Cysteine 29 contacts Zn(2+). Residues 31-41 carry the 'HIGH' region motif; sequence PTVYDDAHIGN. Zn(2+) contacts are provided by cysteine 221, histidine 246, and glutamate 250. The short motif at 279–283 is the 'KMSKS' region element; it reads KMSKS. Lysine 282 is a binding site for ATP.

It belongs to the class-I aminoacyl-tRNA synthetase family. In terms of assembly, monomer. Zn(2+) serves as cofactor.

It is found in the cytoplasm. The catalysed reaction is tRNA(Cys) + L-cysteine + ATP = L-cysteinyl-tRNA(Cys) + AMP + diphosphate. The chain is Cysteine--tRNA ligase 1 from Burkholderia lata (strain ATCC 17760 / DSM 23089 / LMG 22485 / NCIMB 9086 / R18194 / 383).